A 573-amino-acid polypeptide reads, in one-letter code: ESX-1 secretion system protein EccA1 (573 aa).

334-341 is a binding site for ATP; it reads GPPGTGKT.

Belongs to the CbxX/CfxQ family. As to quaternary structure, part of the ESX-1 / type VII secretion system (T7SS), which is composed of cytosolic and membrane components.

It is found in the cytoplasm. In terms of biological role, part of the ESX-1 specialized secretion system, which delivers several virulence factors to host cells during infection, including the key virulence factors EsxA (ESAT-6) and EsxB (CFP-10). EccA1 exhibits ATPase activity and may provide energy for the export of ESX-1 substrates. This chain is ESX-1 secretion system protein EccA1, found in Mycobacterium tuberculosis (strain CDC 1551 / Oshkosh).